The primary structure comprises 206 residues: Uracil phosphoribosyltransferase (206 aa).

5-phospho-alpha-D-ribose 1-diphosphate contacts are provided by residues Arg76, Arg101, and 128–136 (DPMLATGTT). Uracil-binding positions include Ile191 and 196–198 (GDA). Position 197 (Asp197) interacts with 5-phospho-alpha-D-ribose 1-diphosphate.

This sequence belongs to the UPRTase family. Mg(2+) is required as a cofactor.

The catalysed reaction is UMP + diphosphate = 5-phospho-alpha-D-ribose 1-diphosphate + uracil. It functions in the pathway pyrimidine metabolism; UMP biosynthesis via salvage pathway; UMP from uracil: step 1/1. Its activity is regulated as follows. Allosterically activated by GTP. Catalyzes the conversion of uracil and 5-phospho-alpha-D-ribose 1-diphosphate (PRPP) to UMP and diphosphate. This Mycoplasma genitalium (strain ATCC 33530 / DSM 19775 / NCTC 10195 / G37) (Mycoplasmoides genitalium) protein is Uracil phosphoribosyltransferase.